A 292-amino-acid chain; its full sequence is 33 kDa chaperonin (292 aa).

2 cysteine pairs are disulfide-bonded: cysteine 230/cysteine 232 and cysteine 263/cysteine 266.

Belongs to the HSP33 family. In terms of processing, under oxidizing conditions two disulfide bonds are formed involving the reactive cysteines. Under reducing conditions zinc is bound to the reactive cysteines and the protein is inactive.

The protein localises to the cytoplasm. Its function is as follows. Redox regulated molecular chaperone. Protects both thermally unfolding and oxidatively damaged proteins from irreversible aggregation. Plays an important role in the bacterial defense system toward oxidative stress. The polypeptide is 33 kDa chaperonin (Cronobacter sakazakii (strain ATCC BAA-894) (Enterobacter sakazakii)).